A 186-amino-acid polypeptide reads, in one-letter code: Ribosome-recycling factor (186 aa).

It belongs to the RRF family.

It is found in the cytoplasm. Functionally, responsible for the release of ribosomes from messenger RNA at the termination of protein biosynthesis. May increase the efficiency of translation by recycling ribosomes from one round of translation to another. This is Ribosome-recycling factor from Rickettsia conorii (strain ATCC VR-613 / Malish 7).